Here is a 366-residue protein sequence, read N- to C-terminus: Isocitrate dehydrogenase [NAD] subunit alpha, mitochondrial (366 aa).

The N-terminal 27 residues, 1–27 (MAGPAWISKVSRLLGAFHNPKQVTRGF), are a transit peptide targeting the mitochondrion. An N6-succinyllysine modification is found at lysine 77. At threonine 101 the chain carries Phosphothreonine. 3 residues coordinate substrate: arginine 115, arginine 125, and arginine 146. An N6-acetyllysine modification is found at lysine 223. Residues aspartate 233, aspartate 257, and aspartate 261 each contribute to the Mg(2+) site. Lysine 343 bears the N6-acetyllysine; alternate mark. Lysine 343 carries the post-translational modification N6-succinyllysine; alternate. Lysine 350 bears the N6-succinyllysine mark.

This sequence belongs to the isocitrate and isopropylmalate dehydrogenases family. Heterooligomer of subunits alpha (IDH3A), beta (IDH3B), and gamma (IDH3G) in the apparent ratio of 2:1:1. The heterodimer containing one IDH3A and one IDH3B subunit and the heterodimer containing one IDH3A and one IDH3G subunit assemble into a heterotetramer (which contains two subunits of IDH3A, one of IDH3B and one of IDH3G) and further into the heterooctamer. Requires Mg(2+) as cofactor. Mn(2+) is required as a cofactor.

It is found in the mitochondrion. The catalysed reaction is D-threo-isocitrate + NAD(+) = 2-oxoglutarate + CO2 + NADH. With respect to regulation, the heterotetramer and the heterodimer composed of IDH3A and IDH3G subunits can be allosterically activated by citrate (CIT) or/and ADP, and the two activators can act independently or synergistically. The heterodimer composed of IDH3A and IDH3B subunits cannot be allosterically regulated and the allosteric regulation of the heterotetramer is through the IDH3G subunit and not the IDH3B subunit. The IDH3G subunit contains the allosteric site which consists of a CIT-binding site and an ADP-binding site, and the binding of CIT and ADP causes conformational changes at the allosteric site which are transmitted to the active site in the catalytic subunit (IDH3A) through a cascade of conformational changes at the heterodimer interface, leading to stabilization of the isocitrate-binding at the active site and thus activation of the enzyme. ATP can activate the heterotetramer and the heterodimer composed of IDH3A and IDH3G subunits at low concentrations but inhibits their activities at high concentrations, whereas ATP exhibits only inhibitory effect on the heterodimer composed of IDH3A and IDH3B subunits. Its function is as follows. Catalytic subunit of the enzyme which catalyzes the decarboxylation of isocitrate (ICT) into alpha-ketoglutarate. The heterodimer composed of the alpha (IDH3A) and beta (IDH3B) subunits and the heterodimer composed of the alpha (IDH3A) and gamma (IDH3G) subunits, have considerable basal activity but the full activity of the heterotetramer (containing two subunits of IDH3A, one of IDH3B and one of IDH3G) requires the assembly and cooperative function of both heterodimers. The protein is Isocitrate dehydrogenase [NAD] subunit alpha, mitochondrial of Pongo abelii (Sumatran orangutan).